The following is a 222-amino-acid chain: Pectate lyase A (222 aa).

An N-terminal signal peptide occupies residues 1-25; it reads MKKMLTLLLSAGLVASIFGVMPAAA.

This sequence belongs to the polysaccharide lyase 3 family. The cofactor is Ca(2+).

The protein resides in the secreted. The catalysed reaction is Eliminative cleavage of (1-&gt;4)-alpha-D-galacturonan to give oligosaccharides with 4-deoxy-alpha-D-galact-4-enuronosyl groups at their non-reducing ends.. It carries out the reaction Eliminative cleavage of (1-&gt;4)-alpha-D-galacturonan methyl ester to give oligosaccharides with 4-deoxy-6-O-methyl-alpha-D-galact-4-enuronosyl groups at their non-reducing ends.. It functions in the pathway glycan metabolism; pectin degradation; 2-dehydro-3-deoxy-D-gluconate from pectin: step 2/5. With respect to regulation, strongly inhibited by Ba(2+). To a lesser extent, is also inhibited by Sn(2+), Mg(2+) and Ag(+). Inhibited by EDTA in vitro. In terms of biological role, catalyzes the depolymerization of both polygalacturonate and pectins of methyl esterification degree from 22 to 89%, with an endo mode of action. In contrast to the majority of pectate lyases, displays high activity on highly methylated pectins. Is not able to cleave trigalacturonate. Does not degrade xylans and carboxymethylcellulose (CMC). The sequence is that of Pectate lyase A (pelA) from Paenibacillus barcinonensis.